The following is a 209-amino-acid chain: Abscisic acid receptor PYL3 (209 aa).

The tract at residues 1–23 is disordered; sequence MNLAPIHDPSSSSTTTTSSSTPY. Residues 10-21 are compositionally biased toward low complexity; the sequence is SSSSTTTTSSST. Residues 43–205 are START-like; sequence FPRSPNTCTS…NLQNLAVIST (163 aa). Abscisate contacts are provided by residues Lys-79, 113-118, 140-146, and Glu-170; these read ASTSVE and RLNNYRS. The short motif at 109 to 113 is the Gate loop element; that stretch reads SGLPA. The Latch loop motif lies at 139–141; that stretch reads HRL.

It belongs to the PYR/PYL/RCAR abscisic acid intracellular receptor family. As to quaternary structure, homodimer and monomer. Binds ABA on one subunit only. ABA-binding favors monomer and trans-homodimer intermediate, and increases PP2C inhibitor activity. Binds both (-)-ABA and (+)-ABA. Binds to CARs protein in an ABA-independent manner, both at the plasma membrane and in the nucleus. Interacts with HAB1, ABI1 and ABI2, and possibly with other PP2Cs.

It localises to the cytoplasm. It is found in the nucleus. The protein localises to the cell membrane. Functionally, receptor for abscisic acid (ABA) required for ABA-mediated responses such as stomatal closure and germination inhibition. Inhibits the activity of group-A protein phosphatases type 2C (PP2Cs) when activated by ABA. Can be activated by both (-)-ABA and (+)-ABA. The chain is Abscisic acid receptor PYL3 (PYL3) from Arabidopsis thaliana (Mouse-ear cress).